The primary structure comprises 265 residues: Large ribosomal subunit protein eL8 (265 aa).

It belongs to the eukaryotic ribosomal protein eL8 family. Interacts with cmd-1 in the presence of Ca(2+).

In Caenorhabditis elegans, this protein is Large ribosomal subunit protein eL8.